Reading from the N-terminus, the 681-residue chain is Sodium-dependent phosphate transporter 1 (681 aa).

Helical transmembrane passes span Asn25–Ala45, Ala66–Ser86, Leu106–Phe126, Ile162–Phe182, Ala201–Gly221, and Gly234–Val254. The tract at residues Val266–Val295 is disordered. A phosphoserine mark is found at Ser269 and Ser273. Positions Leu275–Lys289 are enriched in basic and acidic residues. 4 consecutive transmembrane segments (helical) span residues Val513 to Gly533, Ala561 to Trp581, Phe602 to Ile622, and Ile652 to Ala672.

This sequence belongs to the inorganic phosphate transporter (PiT) (TC 2.A.20) family. In terms of tissue distribution, ubiquitously expressed.

The protein resides in the cell membrane. It carries out the reaction 2 Na(+)(out) + phosphate(out) = 2 Na(+)(in) + phosphate(in). Its function is as follows. Sodium-phosphate symporter which preferentially transports the monovalent form of phosphate with a stoichiometry of two sodium ions per phosphate ion. May play a role in extracellular matrix and cartilage calcification as well as in vascular calcification. Essential for cell proliferation but this function is independent of its phosphate transporter activity. This Rattus norvegicus (Rat) protein is Sodium-dependent phosphate transporter 1 (Slc20a1).